Here is a 1059-residue protein sequence, read N- to C-terminus: Carbamoyl phosphate synthase large chain (1059 aa).

A carboxyphosphate synthetic domain region spans residues 1 to 401 (MPKRKDIQKI…SLLKACRSLE (401 aa)). ATP is bound by residues R129, R169, G175, G176, R208, I210, E215, G241, I242, H243, Q284, and E298. One can recognise an ATP-grasp 1 domain in the interval 133-327 (KQLMEELGQP…IAKLAAKIAV (195 aa)). Positions 284, 298, and 300 each coordinate Mg(2+). Q284, E298, and N300 together coordinate Mn(2+). Positions 402-546 (VCVDHNELPA…YSTYGFENES (145 aa)) are oligomerization domain. The carbamoyl phosphate synthetic domain stretch occupies residues 547–929 (VKSSKESVLV…ALYKAFEASY (383 aa)). The ATP-grasp 2 domain maps to 671–861 (EQALKELDIP…MAQVATRLIL (191 aa)). The ATP site is built by R707, S746, I748, E752, G777, V778, H779, S780, Q820, and E832. Mg(2+)-binding residues include Q820, E832, and N834. 3 residues coordinate Mn(2+): Q820, E832, and N834. One can recognise an MGS-like domain in the interval 930 to 1059 (LHLPNFGNIV…ESRSFTTEAI (130 aa)). Residues 930 to 1059 (LHLPNFGNIV…ESRSFTTEAI (130 aa)) form an allosteric domain region.

The protein belongs to the CarB family. Composed of two chains; the small (or glutamine) chain promotes the hydrolysis of glutamine to ammonia, which is used by the large (or ammonia) chain to synthesize carbamoyl phosphate. Tetramer of heterodimers (alpha,beta)4. It depends on Mg(2+) as a cofactor. Mn(2+) serves as cofactor.

It catalyses the reaction hydrogencarbonate + L-glutamine + 2 ATP + H2O = carbamoyl phosphate + L-glutamate + 2 ADP + phosphate + 2 H(+). The catalysed reaction is hydrogencarbonate + NH4(+) + 2 ATP = carbamoyl phosphate + 2 ADP + phosphate + 2 H(+). Its pathway is amino-acid biosynthesis; L-arginine biosynthesis; carbamoyl phosphate from bicarbonate: step 1/1. The protein operates within pyrimidine metabolism; UMP biosynthesis via de novo pathway; (S)-dihydroorotate from bicarbonate: step 1/3. In terms of biological role, large subunit of the glutamine-dependent carbamoyl phosphate synthetase (CPSase). CPSase catalyzes the formation of carbamoyl phosphate from the ammonia moiety of glutamine, carbonate, and phosphate donated by ATP, constituting the first step of 2 biosynthetic pathways, one leading to arginine and/or urea and the other to pyrimidine nucleotides. The large subunit (synthetase) binds the substrates ammonia (free or transferred from glutamine from the small subunit), hydrogencarbonate and ATP and carries out an ATP-coupled ligase reaction, activating hydrogencarbonate by forming carboxy phosphate which reacts with ammonia to form carbamoyl phosphate. This is Carbamoyl phosphate synthase large chain from Streptococcus sanguinis (strain SK36).